The chain runs to 102 residues: MEKQNIRIKLRAYDNKILDASTEEIVNTVKRTGATIKGPIPLPTRIERYTVLKGPHIDKKSREQFETRTHKRLIDIIEPTPQTVEALMKLDLASGVDVEIKI.

It belongs to the universal ribosomal protein uS10 family. Part of the 30S ribosomal subunit.

In terms of biological role, involved in the binding of tRNA to the ribosomes. The polypeptide is Small ribosomal subunit protein uS10 (Pelagibacter ubique (strain HTCC1062)).